Here is a 379-residue protein sequence, read N- to C-terminus: Retinoic acid receptor RXR-alpha-B (379 aa).

Polar residues predominate over residues 1–22; it reads MPVPEQKQTVQLSSPMNAVSSS. Residues 1 to 24 form a disordered region; it reads MPVPEQKQTVQLSSPMNAVSSSED. The modulating stretch occupies residues 1 to 53; it reads MPVPEQKQTVQLSSPMNAVSSSEDIKPPLGLNGVMKVPAHRIGTLSLSLTKHI. Positions 51 to 126 form a DNA-binding region, nuclear receptor; that stretch reads KHICAICGDR…MGMKREAVQE (76 aa). Zn(2+) contacts are provided by C54, C57, C71, and C74. The segment at 54-74 adopts an NR C4-type zinc-finger fold; that stretch reads CAICGDRSSGKHYGVYSCEGC. The interval 79–84 is nuclear localization signal; that stretch reads KRTVRK. Residues C90, C96, C106, and C109 each coordinate Zn(2+). The segment at 90-109 adopts an NR C4-type zinc-finger fold; sequence CRDNKDCMIDKRQRNRCQYC. The interval 120 to 141 is hinge; that stretch reads KREAVQEERQRAKERSEAEFGG. The 232-residue stretch at 144 to 375 folds into the NR LBD domain; it reads NEDMPVEKIL…TFLMEMLEAP (232 aa). The 9-cis-retinoate site is built by R233 and A244. Positions 233 and 244 each coordinate all-trans-retinoate. Residues 265 to 285 form a required for nuclear export region; the sequence is RVLTELVSKMRDMQMDKTELG. The segment at 364-375 is AF-2; it reads IDTFLMEMLEAP.

The protein belongs to the nuclear hormone receptor family. NR2 subfamily. As to quaternary structure, homodimer. Heterodimer; with a rar molecule. Binds DNA preferentially as a rar/rxr heterodimer. As to expression, uniform expression from the blastula to mid-gastrula stages. At 12 hours post-fertilization (hpf), expressed strongly in the tail and weakly elsewhere. At 24 hpf, weak expression in the forebrain, eyes and pharyngeal endoderm and continued expression in the tail mesoderm. At 48 hpf, anterior expression limited to ventral cells underlying the head, medial expression in the pectoral fin bud mesoderm and continued tail expression.

Its subcellular location is the nucleus. Receptor for retinoic acid that acts as a transcription factor. Forms homo- or heterodimers with retinoic acid receptors (rars) and binds to target response elements in response to their ligands, all-trans or 9-cis retinoic acid, to regulate gene expression in various biological processes. The rar/rxr heterodimers bind to the retinoic acid response elements (RARE) composed of tandem 5'-AGGTCA-3' sites known as DR1-DR5 to regulate transcription. The high affinity ligand for rxrs is 9-cis retinoic acid. In the absence of ligand, the rar/rxr heterodimers associate with a multiprotein complex containing transcription corepressors that induce histone deacetylation, chromatin condensation and transcriptional suppression. On ligand binding, the corepressors dissociate from the receptors and coactivators are recruited leading to transcriptional activation. This Danio rerio (Zebrafish) protein is Retinoic acid receptor RXR-alpha-B (rxrab).